The primary structure comprises 167 residues: MDQAKLARMQASVRIGNPPSGPRANRNRGKGTPRRKVKKVHKSSGADDKKLQATLKKMNVQPIPAVEEVNMFKEDGNVIHFGNPRVHASVPSNTFALYGNGEEKELTELVPGILNQLGPDSLASLRKLAESYQNMQKNQAGAEGKKDDEEDDIPDLVEGQDFESKVE.

2 disordered regions span residues 1 to 48 (MDQA…GADD) and 133 to 167 (QNMQ…SKVE). Residues 25–42 (NRNRGKGTPRRKVKKVHK) show a composition bias toward basic residues. In terms of domain architecture, NAC-A/B spans 45-110 (GADDKKLQAT…GEEKELTELV (66 aa)). Over residues 148 to 161 (DEEDDIPDLVEGQD) the composition is skewed to acidic residues.

Belongs to the NAC-beta family. Part of the nascent polypeptide-associated complex (NAC), consisting of egd2 and egd1. NAC associates with ribosomes via egd1.

It localises to the cytoplasm. It is found in the nucleus. Component of the nascent polypeptide-associated complex (NAC), a dynamic component of the ribosomal exit tunnel, protecting the emerging polypeptides from interaction with other cytoplasmic proteins to ensure appropriate nascent protein targeting. The NAC complex also promotes mitochondrial protein import by enhancing productive ribosome interactions with the outer mitochondrial membrane and blocks the inappropriate interaction of ribosomes translating non-secretory nascent polypeptides with translocation sites in the membrane of the endoplasmic reticulum. EGD1 may act as a transcription factor that exert a negative effect on the expression of several genes that are transcribed by RNA polymerase II. This is Nascent polypeptide-associated complex subunit beta (egd1) from Aspergillus terreus (strain NIH 2624 / FGSC A1156).